Consider the following 436-residue polypeptide: RNA polymerase sigma-54 factor (436 aa).

A DNA-binding region (H-T-H motif) is located at residues 324 to 343; it reads TLREVADCLSLHESTVSRAI. Residues 413-421 carry the RPON box motif; the sequence is SRRTVAKYR.

It belongs to the sigma-54 factor family. In terms of assembly, interacts transiently with the RNAP core.

Sigma factors are initiation factors that promote the attachment of RNA polymerase (RNAP) to specific initiation sites and are then released. This sigma factor is responsible for the expression of the levanase operon. The open complex (sigma-54 and core RNA polymerase) serves as the receptor for receipt of the melting signal from the remotely bound activator protein LevR for the expression of the levanase operon. Associates with the RNAP core only in stationary phase cells. The chain is RNA polymerase sigma-54 factor (sigL) from Bacillus subtilis (strain 168).